A 379-amino-acid chain; its full sequence is Cytochrome b (379 aa).

4 consecutive transmembrane segments (helical) span residues 33 to 53 (FGSLLGICLILQIITGLFLAM), 77 to 98 (WMIRYMHANGASMFFICLFIHI), 113 to 133 (WNIGVILLFTTMATAFMGYVL), and 178 to 198 (FFAFHFILPFIIMALAAVHLL). Residues H83 and H97 each contribute to the heme b site. Residues H182 and H196 each coordinate heme b. H201 is a binding site for a ubiquinone. 4 helical membrane-spanning segments follow: residues 226–246 (MKDIMGFLTMFLALLTLVLFY), 288–308 (LGGVVALMLSILILIFLPMMH), 320–340 (LSQCMFWILVANLLTLTWIGG), and 347–367 (FIMIGQLASLSYFLIILIIMP).

The protein belongs to the cytochrome b family. The cytochrome bc1 complex contains 11 subunits: 3 respiratory subunits (MT-CYB, CYC1 and UQCRFS1), 2 core proteins (UQCRC1 and UQCRC2) and 6 low-molecular weight proteins (UQCRH/QCR6, UQCRB/QCR7, UQCRQ/QCR8, UQCR10/QCR9, UQCR11/QCR10 and a cleavage product of UQCRFS1). This cytochrome bc1 complex then forms a dimer. Heme b serves as cofactor.

It localises to the mitochondrion inner membrane. In terms of biological role, component of the ubiquinol-cytochrome c reductase complex (complex III or cytochrome b-c1 complex) that is part of the mitochondrial respiratory chain. The b-c1 complex mediates electron transfer from ubiquinol to cytochrome c. Contributes to the generation of a proton gradient across the mitochondrial membrane that is then used for ATP synthesis. This chain is Cytochrome b (MT-CYB), found in Massoutiera mzabi (Mzab gundi).